We begin with the raw amino-acid sequence, 201 residues long: Cell division protein SepF (201 aa).

Basic and acidic residues predominate over residues 27–38 (VQERTSVQRDSR). Residues 27 to 99 (VQERTSVQRD…PRVQNKDSVR (73 aa)) form a disordered region. The segment covering 43–54 (QEASQRSHMTNS) has biased composition (polar residues). Basic and acidic residues predominate over residues 72 to 81 (NRQERQRVQR). Residues 83-92 (NAYQQATPRV) are compositionally biased toward polar residues.

It belongs to the SepF family. As to quaternary structure, homodimer. Interacts with FtsZ.

It is found in the cytoplasm. Its function is as follows. Cell division protein that is part of the divisome complex and is recruited early to the Z-ring. Probably stimulates Z-ring formation, perhaps through the cross-linking of FtsZ protofilaments. Its function overlaps with FtsA. This is Cell division protein SepF from Streptococcus agalactiae serotype V (strain ATCC BAA-611 / 2603 V/R).